The following is a 296-amino-acid chain: Probable AP endonuclease (296 aa).

Cys-16 and Cys-20 form a disulfide bridge. 8 residues coordinate Zn(2+): His-78, His-115, Glu-142, His-182, His-218, Asp-231, His-233, and Glu-271.

It belongs to the AP endonuclease 2 family. Zn(2+) serves as cofactor.

It is found in the host nucleus. The protein localises to the host cytoplasm. Its subcellular location is the virion. In terms of biological role, endonuclease of the viral base excision repair system that catalyzes DNA cleavage reaction at the apurinic or apyrimidinic sites (AP sites). Cleaves phosphodiester bonds on the 5' side of AP sites. In addition to endonuclease activity, the AP endonuclease has a proofreading 3'-5' exonuclease activity that is considerably more efficient in the elimination of a mismatch than in that of a correctly paired base. Displays 3'-phosphatase and 3'-repair diesterase activities. The single nucleotide gaps generated by the AP endonuclease are filled by the viral repair DNA polymerase X and the DNA ligase. This chain is Probable AP endonuclease, found in Ornithodoros (relapsing fever ticks).